The chain runs to 354 residues: Guanine nucleotide-binding protein alpha-16 subunit (354 aa).

Residue Gly-2 is the site of N-myristoyl glycine attachment. The S-palmitoyl cysteine moiety is linked to residue Cys-3. Positions 31–354 (KTVKLLLLGA…RDNLRTCGLY (324 aa)) constitute a G-alpha domain. Residues 34-47 (KLLLLGAGESGKST) are G1 motif. GTP contacts are provided by residues 39–46 (GAGESGKS), 174–180 (LRTRIKT), 199–203 (DVGGQ), 268–271 (NKKD), and Ala-326. The Mg(2+) site is built by Ser-46 and Thr-180. The G2 motif stretch occupies residues 172–180 (DVLRTRIKT). A G3 motif region spans residues 195–204 (FVVFDVGGQR). Residues 264–271 (ILFLNKKD) form a G4 motif region. The interval 324-329 (TCATDT) is G5 motif.

The protein belongs to the G-alpha family. G proteins are composed of 3 units; alpha, beta and gamma. The alpha chain contains the guanine nucleotide binding site.

Guanine nucleotide-binding proteins (G proteins) are involved as modulators or transducers in various transmembrane signaling systems. In the 1-cell embryo, probably together with goa-1, controls nuclear rotation and spindle elongation during mitosis. During the first embryonic cell divisons, plays a role in gpr-1/2 cortical localization and in the proper orientation of EMS blastomere mitotic spindle. The chain is Guanine nucleotide-binding protein alpha-16 subunit (gpa-16) from Caenorhabditis briggsae.